The sequence spans 136 residues: Nucleoside diphosphate kinase (136 aa).

Residues Lys-10, Phe-58, Arg-86, Thr-92, Arg-104, and Asn-114 each coordinate ATP. The active-site Pros-phosphohistidine intermediate is His-117.

Belongs to the NDK family. Homotetramer. It depends on Mg(2+) as a cofactor.

The protein localises to the cytoplasm. It carries out the reaction a 2'-deoxyribonucleoside 5'-diphosphate + ATP = a 2'-deoxyribonucleoside 5'-triphosphate + ADP. It catalyses the reaction a ribonucleoside 5'-diphosphate + ATP = a ribonucleoside 5'-triphosphate + ADP. In terms of biological role, major role in the synthesis of nucleoside triphosphates other than ATP. The ATP gamma phosphate is transferred to the NDP beta phosphate via a ping-pong mechanism, using a phosphorylated active-site intermediate. The protein is Nucleoside diphosphate kinase of Mycobacterium leprae (strain TN).